A 489-amino-acid chain; its full sequence is Equilibrative nucleobase transporter 1 (489 aa).

Residues 17-37 (LLECLGFAGVLFGWTSLVFVF) form a helical membrane-spanning segment. The N-linked (GlcNAc...) asparagine glycan is linked to N56. 4 consecutive transmembrane segments (helical) span residues 72–92 (LIFTLASFTINFMTFPTGYIF), 102–122 (LIAIFLYTSATLTIAFTSADS), 123–143 (AVLLFLAMPMLAVGGILFLIT), and 158–180 (IITMYNGAFDSSSAVFLIIKLLY). S253 is subject to Phosphoserine. T258 carries the phosphothreonine modification. The next 6 membrane-spanning stretches (helical) occupy residues 277–297 (FAWHVVWLSVIQLWHYLFIGT), 318–338 (NAFAVTQFFGVLCAPWNGLLM), 358–380 (AAALRSVVPSLTLTSLLSLGFAV), 402–422 (SFLYGCNAAFLTLAFPSEHFG), 426–446 (GLVMALSAVVSLLQFPLFTLI), and 455–475 (LYVNLMLVLLTLLTFIHPFLV).

This sequence belongs to the SLC43A transporter (TC 2.A.1.44) family.

The protein resides in the basolateral cell membrane. The enzyme catalyses adenine(out) = adenine(in). The catalysed reaction is guanine(out) = guanine(in). It carries out the reaction hypoxanthine(out) = hypoxanthine(in). Sodium-independent purine-selective nucleobase transporter which mediates the equilibrative transport of extracellular purine nucleobases such as adenine, guanine and hypoxanthine. May regulate fatty acid (FA) transport in adipocytes, acting as a positive regulator of FA efflux and as a negative regulator of FA uptake. This chain is Equilibrative nucleobase transporter 1 (SLC43A3), found in Bos taurus (Bovine).